Here is a 301-residue protein sequence, read N- to C-terminus: Uricase (301 aa).

Catalysis depends on charge relay system residues Lys-11 and Thr-58. Urate is bound by residues Thr-58, Asp-59, Phe-160, Arg-177, Val-228, Gln-229, and Asn-255. Catalysis depends on His-257, which acts as the Charge relay system. The Microbody targeting signal signature appears at Ala-299–Leu-301.

This sequence belongs to the uricase family.

It is found in the peroxisome. It carries out the reaction urate + O2 + H2O = 5-hydroxyisourate + H2O2. Its pathway is purine metabolism; urate degradation; (S)-allantoin from urate: step 1/3. Its function is as follows. Catalyzes the oxidation of uric acid to 5-hydroxyisourate, which is further processed to form (S)-allantoin. This Emericella nidulans (strain FGSC A4 / ATCC 38163 / CBS 112.46 / NRRL 194 / M139) (Aspergillus nidulans) protein is Uricase (uaZ).